A 256-amino-acid polypeptide reads, in one-letter code: MKFGKSLSNQIEQTLPEWQDKFLSYKELKKRLKLIGSKTADRPVKRLRLDEFSVGISKEEINFIQLLEDELEKFNNFFVEKEEEYIIRLKEFRDRIAKAKDSMEKMIKIRKEIVDFHGEMVLLENYSALNYTGLVKILKKYDKRTGDLMRLPFIQKVLQQPFYTTDLLFKLVKESEAMLDQIFPANETESEIIQAELSEHKFMESLHMKSTIAALRVLKEIRSGSSTVSVFSLPPLQLNGLDETWKKIPLLEQEAK.

Positions 1–155 constitute an SPX domain; it reads MKFGKSLSNQ…GDLMRLPFIQ (155 aa). The short motif at 30 to 46 is the Bipartite nuclear localization signal element; sequence KRLKLIGSKTADRPVKR.

Interacts with PHR1 in a highly Pi-dependent manner.

It localises to the nucleus. Functionally, plays a positive role in plant adaptation to phosphate starvation. Inhibits PHR1 DNA-binding activity in a Pi-dependent manner. This is SPX domain-containing protein 1 from Arabidopsis thaliana (Mouse-ear cress).